Here is a 497-residue protein sequence, read N- to C-terminus: Probable sensor kinase SilS (497 aa).

Over 1-15 the chain is Cytoplasmic; that stretch reads MHSKPSRLPFSLALR. Residues 16 to 36 traverse the membrane as a helical segment; the sequence is LTFFISLSTILAFIAFTWFML. Residues 37-186 are Periplasmic-facing; the sequence is HSVEKHFAEQ…HLHYLDALKK (150 aa). A helical membrane pass occupies residues 187–207; that stretch reads NLIAIAVVISLLIVLIIRIAV. Positions 208 to 261 constitute an HAMP domain; sequence RQGHLPLRNVSNAIKNITSENLDARLEPTRVPIELEQLVISFNHMIGKIEDVFT. Topologically, residues 208-497 are cytoplasmic; that stretch reads RQGHLPLRNV…KMIPDTQCWE (290 aa). The 219-residue stretch at 269–487 folds into the Histidine kinase domain; it reads DIAHEIRTPI…RFILSVPRLE (219 aa). H272 is modified (phosphohistidine; by autocatalysis).

It localises to the cell inner membrane. It carries out the reaction ATP + protein L-histidine = ADP + protein N-phospho-L-histidine.. In terms of biological role, component of the sil cation-efflux system that confers resistance to silver. Probable member of a two-component regulatory system SilS/SilR. May activate SilR by phosphorylation. The polypeptide is Probable sensor kinase SilS (silS) (Salmonella typhimurium).